Here is a 275-residue protein sequence, read N- to C-terminus: Homeobox-leucine zipper protein ATHB-17 (275 aa).

The tract at residues 95-143 (SSPLSDEGSGGGRDQLRLDMNRLPSSEDGDDEEFSHDDGSAPPRKKLRL) is disordered. The segment at residues 136–195 (PPRKKLRLTREQSRLLEDSFRQNHTLNPKQKEVLAKHLMLRPRQIEVWFQNRRARSKLKQ) is a DNA-binding region (homeobox). The segment at 203 to 224 (LKRWFGSLTEENHRLHREVEEL) is leucine-zipper. Positions 252 to 275 (AASPSRAVVPVPAKKTFPPQERDR) are disordered.

It belongs to the HD-ZIP homeobox family. Class II subfamily.

It localises to the nucleus. In terms of biological role, probable transcription factor. This Arabidopsis thaliana (Mouse-ear cress) protein is Homeobox-leucine zipper protein ATHB-17 (ATHB-17).